Reading from the N-terminus, the 250-residue chain is Type III pantothenate kinase (250 aa).

6–13 (DVGNTNTV) lines the ATP pocket. A substrate-binding site is contributed by 103–106 (GADR). Asp105 (proton acceptor) is an active-site residue. Position 125 (Asp125) interacts with K(+). Residue Thr128 coordinates ATP. Thr180 contributes to the substrate binding site.

It belongs to the type III pantothenate kinase family. In terms of assembly, homodimer. NH4(+) is required as a cofactor. K(+) serves as cofactor.

The protein resides in the cytoplasm. The enzyme catalyses (R)-pantothenate + ATP = (R)-4'-phosphopantothenate + ADP + H(+). It functions in the pathway cofactor biosynthesis; coenzyme A biosynthesis; CoA from (R)-pantothenate: step 1/5. In terms of biological role, catalyzes the phosphorylation of pantothenate (Pan), the first step in CoA biosynthesis. The sequence is that of Type III pantothenate kinase from Frankia alni (strain DSM 45986 / CECT 9034 / ACN14a).